Consider the following 657-residue polypeptide: DNA mismatch repair protein MutL (657 aa).

It belongs to the DNA mismatch repair MutL/HexB family.

In terms of biological role, this protein is involved in the repair of mismatches in DNA. It is required for dam-dependent methyl-directed DNA mismatch repair. May act as a 'molecular matchmaker', a protein that promotes the formation of a stable complex between two or more DNA-binding proteins in an ATP-dependent manner without itself being part of a final effector complex. This Streptococcus agalactiae serotype III (strain NEM316) protein is DNA mismatch repair protein MutL.